The chain runs to 243 residues: CTD nuclear envelope phosphatase 1 homolog (243 aa).

The chain crosses the membrane as a helical span at residues 11-27 (ALLLLLSKVWTCICFMF). An FCP1 homology domain is found at 56-223 (SLVQRKTLVL…LSLLPMLDAL (168 aa)).

It belongs to the dullard family.

It is found in the membrane. The enzyme catalyses O-phospho-L-seryl-[protein] + H2O = L-seryl-[protein] + phosphate. It carries out the reaction O-phospho-L-threonyl-[protein] + H2O = L-threonyl-[protein] + phosphate. Functionally, serine/threonine protein phosphatase that may dephosphorylate and activate lipin-like phosphatases. Lipins are phosphatidate phosphatases that catalyze the conversion of phosphatidic acid to diacylglycerol and control the metabolism of fatty acids at different levels. May indirectly modulate the lipid composition of nuclear and/or endoplasmic reticulum membranes and be required for proper nuclear membrane morphology and/or dynamics. May also indirectly regulate the production of lipid droplets and triacylglycerol. The protein is CTD nuclear envelope phosphatase 1 homolog (l(1)G0269) of Drosophila pseudoobscura pseudoobscura (Fruit fly).